A 297-amino-acid polypeptide reads, in one-letter code: Phosphatidylglycerol--prolipoprotein diacylglyceryl transferase (297 aa).

Helical transmembrane passes span 20-40 (FITIRWYGLLISVSVLIGLFI), 57-77 (EILPSLIIFSIIGARAYYVIF), 107-127 (WEGGIAIHGGLIGGLISIIFF), and 133-153 (IHLKTFIDILIPSIILGQSIG). Position 154 (Arg154) interacts with a 1,2-diacyl-sn-glycero-3-phospho-(1'-sn-glycerol). Helical transmembrane passes span 193 to 213 (PTFLYESLWNLLVFIFLILIF), 225 to 245 (GFISCLYLICYSFGRFWIEGL), and 266 to 286 (AQFISIFLFSSGLIGIFFLRL).

Belongs to the Lgt family.

It is found in the cell inner membrane. It carries out the reaction L-cysteinyl-[prolipoprotein] + a 1,2-diacyl-sn-glycero-3-phospho-(1'-sn-glycerol) = an S-1,2-diacyl-sn-glyceryl-L-cysteinyl-[prolipoprotein] + sn-glycerol 1-phosphate + H(+). Its pathway is protein modification; lipoprotein biosynthesis (diacylglyceryl transfer). Functionally, catalyzes the transfer of the diacylglyceryl group from phosphatidylglycerol to the sulfhydryl group of the N-terminal cysteine of a prolipoprotein, the first step in the formation of mature lipoproteins. The protein is Phosphatidylglycerol--prolipoprotein diacylglyceryl transferase of Prochlorococcus marinus (strain MIT 9301).